Consider the following 543-residue polypeptide: Chaperonin GroEL (543 aa).

ATP contacts are provided by residues threonine 29–proline 32, aspartate 86–threonine 90, glycine 413, aspartate 477–leucine 479, and aspartate 493.

Belongs to the chaperonin (HSP60) family. As to quaternary structure, forms a cylinder of 14 subunits composed of two heptameric rings stacked back-to-back. Interacts with the co-chaperonin GroES.

It localises to the cytoplasm. The enzyme catalyses ATP + H2O + a folded polypeptide = ADP + phosphate + an unfolded polypeptide.. In terms of biological role, together with its co-chaperonin GroES, plays an essential role in assisting protein folding. The GroEL-GroES system forms a nano-cage that allows encapsulation of the non-native substrate proteins and provides a physical environment optimized to promote and accelerate protein folding. The polypeptide is Chaperonin GroEL (Clostridium botulinum).